The sequence spans 63 residues: Large ribosomal subunit protein uL29 (63 aa).

The protein belongs to the universal ribosomal protein uL29 family.

This Flavobacterium johnsoniae (strain ATCC 17061 / DSM 2064 / JCM 8514 / BCRC 14874 / CCUG 350202 / NBRC 14942 / NCIMB 11054 / UW101) (Cytophaga johnsonae) protein is Large ribosomal subunit protein uL29.